The primary structure comprises 412 residues: Putative competence-damage inducible protein (412 aa).

This sequence belongs to the CinA family.

This Bacillus cereus (strain Q1) protein is Putative competence-damage inducible protein.